A 168-amino-acid polypeptide reads, in one-letter code: ATP synthase subunit b (168 aa).

A helical transmembrane segment spans residues 7–26; the sequence is FVLSNFIFTLINLWIMYWVL.

Belongs to the ATPase B chain family. In terms of assembly, F-type ATPases have 2 components, F(1) - the catalytic core - and F(0) - the membrane proton channel. F(1) has five subunits: alpha(3), beta(3), gamma(1), delta(1), epsilon(1). F(0) has three main subunits: a(1), b(2) and c(10-14). The alpha and beta chains form an alternating ring which encloses part of the gamma chain. F(1) is attached to F(0) by a central stalk formed by the gamma and epsilon chains, while a peripheral stalk is formed by the delta and b chains.

It localises to the cell membrane. F(1)F(0) ATP synthase produces ATP from ADP in the presence of a proton or sodium gradient. F-type ATPases consist of two structural domains, F(1) containing the extramembraneous catalytic core and F(0) containing the membrane proton channel, linked together by a central stalk and a peripheral stalk. During catalysis, ATP synthesis in the catalytic domain of F(1) is coupled via a rotary mechanism of the central stalk subunits to proton translocation. Functionally, component of the F(0) channel, it forms part of the peripheral stalk, linking F(1) to F(0). This Alkaliphilus metalliredigens (strain QYMF) protein is ATP synthase subunit b.